A 341-amino-acid chain; its full sequence is Ketol-acid reductoisomerase (NADP(+)) (341 aa).

The 180-residue stretch at 2–181 (AKVYYNGDAN…GAARAGVLET (180 aa)) folds into the KARI N-terminal Rossmann domain. NADP(+)-binding positions include 25 to 28 (YGSQ), Arg48, Ser52, and 82 to 85 (DEKQ). Residue His107 is part of the active site. Gly133 is a binding site for NADP(+). The 146-residue stretch at 182–327 (TFKEETETDL…RELRSMMPFV (146 aa)) folds into the KARI C-terminal knotted domain. Asp190, Glu194, Glu226, and Glu230 together coordinate Mg(2+). Ser251 provides a ligand contact to substrate.

This sequence belongs to the ketol-acid reductoisomerase family. Mg(2+) is required as a cofactor.

The catalysed reaction is (2R)-2,3-dihydroxy-3-methylbutanoate + NADP(+) = (2S)-2-acetolactate + NADPH + H(+). It carries out the reaction (2R,3R)-2,3-dihydroxy-3-methylpentanoate + NADP(+) = (S)-2-ethyl-2-hydroxy-3-oxobutanoate + NADPH + H(+). It participates in amino-acid biosynthesis; L-isoleucine biosynthesis; L-isoleucine from 2-oxobutanoate: step 2/4. It functions in the pathway amino-acid biosynthesis; L-valine biosynthesis; L-valine from pyruvate: step 2/4. Involved in the biosynthesis of branched-chain amino acids (BCAA). Catalyzes an alkyl-migration followed by a ketol-acid reduction of (S)-2-acetolactate (S2AL) to yield (R)-2,3-dihydroxy-isovalerate. In the isomerase reaction, S2AL is rearranged via a Mg-dependent methyl migration to produce 3-hydroxy-3-methyl-2-ketobutyrate (HMKB). In the reductase reaction, this 2-ketoacid undergoes a metal-dependent reduction by NADPH to yield (R)-2,3-dihydroxy-isovalerate. In Geobacillus thermodenitrificans (strain NG80-2), this protein is Ketol-acid reductoisomerase (NADP(+)).